Here is a 937-residue protein sequence, read N- to C-terminus: Glycine dehydrogenase (decarboxylating) (937 aa).

At lysine 686 the chain carries N6-(pyridoxal phosphate)lysine.

The protein belongs to the GcvP family. As to quaternary structure, the glycine cleavage system is composed of four proteins: P, T, L and H. Pyridoxal 5'-phosphate is required as a cofactor.

It carries out the reaction N(6)-[(R)-lipoyl]-L-lysyl-[glycine-cleavage complex H protein] + glycine + H(+) = N(6)-[(R)-S(8)-aminomethyldihydrolipoyl]-L-lysyl-[glycine-cleavage complex H protein] + CO2. Its function is as follows. The glycine cleavage system catalyzes the degradation of glycine. The P protein binds the alpha-amino group of glycine through its pyridoxal phosphate cofactor; CO(2) is released and the remaining methylamine moiety is then transferred to the lipoamide cofactor of the H protein. The polypeptide is Glycine dehydrogenase (decarboxylating) (Mesorhizobium japonicum (strain LMG 29417 / CECT 9101 / MAFF 303099) (Mesorhizobium loti (strain MAFF 303099))).